Here is a 270-residue protein sequence, read N- to C-terminus: Energy-coupling factor transporter transmembrane protein EcfT (270 aa).

Helical transmembrane passes span 36–56, 72–92, 108–128, and 248–268; these read LFIV…LISI, PIFI…GGAN, LIMA…TSLL, and FIAS…RIWW.

This sequence belongs to the energy-coupling factor EcfT family. Forms a stable energy-coupling factor (ECF) transporter complex composed of 2 membrane-embedded substrate-binding proteins (S component), 2 ATP-binding proteins (A component) and 2 transmembrane proteins (T component). May be able to interact with more than 1 S component at a time.

It is found in the cell membrane. Transmembrane (T) component of an energy-coupling factor (ECF) ABC-transporter complex. Unlike classic ABC transporters this ECF transporter provides the energy necessary to transport a number of different substrates. In Clostridium kluyveri (strain ATCC 8527 / DSM 555 / NBRC 12016 / NCIMB 10680 / K1), this protein is Energy-coupling factor transporter transmembrane protein EcfT.